The chain runs to 116 residues: UPF0102 protein Sala_0262 (116 aa).

It belongs to the UPF0102 family.

This chain is UPF0102 protein Sala_0262, found in Sphingopyxis alaskensis (strain DSM 13593 / LMG 18877 / RB2256) (Sphingomonas alaskensis).